Here is a 145-residue protein sequence, read N- to C-terminus: Putative pre-16S rRNA nuclease (145 aa).

This sequence belongs to the YqgF nuclease family.

It localises to the cytoplasm. In terms of biological role, could be a nuclease involved in processing of the 5'-end of pre-16S rRNA. The protein is Putative pre-16S rRNA nuclease of Prochlorococcus marinus (strain MIT 9211).